Consider the following 185-residue polypeptide: Elongation factor P (185 aa).

This sequence belongs to the elongation factor P family.

It is found in the cytoplasm. It functions in the pathway protein biosynthesis; polypeptide chain elongation. Involved in peptide bond synthesis. Stimulates efficient translation and peptide-bond synthesis on native or reconstituted 70S ribosomes in vitro. Probably functions indirectly by altering the affinity of the ribosome for aminoacyl-tRNA, thus increasing their reactivity as acceptors for peptidyl transferase. This is Elongation factor P from Deinococcus geothermalis (strain DSM 11300 / CIP 105573 / AG-3a).